Reading from the N-terminus, the 156-residue chain is Small ribosomal subunit protein uS7 (156 aa).

It belongs to the universal ribosomal protein uS7 family. In terms of assembly, part of the 30S ribosomal subunit. Contacts proteins S9 and S11.

In terms of biological role, one of the primary rRNA binding proteins, it binds directly to 16S rRNA where it nucleates assembly of the head domain of the 30S subunit. Is located at the subunit interface close to the decoding center, probably blocks exit of the E-site tRNA. The protein is Small ribosomal subunit protein uS7 of Klebsiella pneumoniae subsp. pneumoniae (strain ATCC 700721 / MGH 78578).